We begin with the raw amino-acid sequence, 395 residues long: MSSRVTLHPGREKSLLRRHPWIFASAIESTKGRMNLGDTVDVYSHEDVWLGRGAYSPHSQIQVRIWTFTQNESVDNGFFQRRIARAQQSREELIERHGLTGYRLIAAESDGLPGVTIDVYANVIVCQLLSAGADKHREKIVWALKAQFPEHGIYERSDVAVRKKEGLEEITQVLAGDIPDEVIIEENGVKIIVNVKQGHKTGFYLDQRDNRAIAAQYAKDRDVLNCFCYTGTFGSYALAAGACSVTSLDVSDLALETAKRNVDINQLDSSKCEFINHDVFQALRDYKAQSKQFSQIILDPPKFVDSKASLNRACRGYKDINMLAMQIMAPGGILATFSCSGLMPFDLFQKVVADAALDAGREVQIIQRLSQAPDHPVSTNYPEGFYLKGLICKVL.

The region spanning 2 to 79 is the PUA domain; the sequence is SSRVTLHPGR…QNESVDNGFF (78 aa).

The protein belongs to the methyltransferase superfamily. RlmI family.

It localises to the cytoplasm. It carries out the reaction cytidine(1962) in 23S rRNA + S-adenosyl-L-methionine = 5-methylcytidine(1962) in 23S rRNA + S-adenosyl-L-homocysteine + H(+). Its function is as follows. Specifically methylates the cytosine at position 1962 (m5C1962) of 23S rRNA. This is Ribosomal RNA large subunit methyltransferase I from Pseudoalteromonas atlantica (strain T6c / ATCC BAA-1087).